The primary structure comprises 1028 residues: Exportin-T (1028 aa).

Belongs to the exportin family.

It localises to the nucleus. The protein localises to the cytoplasm. Its function is as follows. tRNA nucleus export receptor which facilitates tRNA translocation across the nuclear pore complex. Involved in pre-tRNA splicing, probably by affecting the interaction of pre-tRNA with splicing endonuclease. The chain is Exportin-T (los1) from Aspergillus terreus (strain NIH 2624 / FGSC A1156).